Here is a 346-residue protein sequence, read N- to C-terminus: Tetraacyldisaccharide 4'-kinase (346 aa).

54-61 (TVGGAGKT) contributes to the ATP binding site.

It belongs to the LpxK family.

It catalyses the reaction a lipid A disaccharide + ATP = a lipid IVA + ADP + H(+). Its pathway is glycolipid biosynthesis; lipid IV(A) biosynthesis; lipid IV(A) from (3R)-3-hydroxytetradecanoyl-[acyl-carrier-protein] and UDP-N-acetyl-alpha-D-glucosamine: step 6/6. Functionally, transfers the gamma-phosphate of ATP to the 4'-position of a tetraacyldisaccharide 1-phosphate intermediate (termed DS-1-P) to form tetraacyldisaccharide 1,4'-bis-phosphate (lipid IVA). The sequence is that of Tetraacyldisaccharide 4'-kinase from Rhizobium meliloti (strain 1021) (Ensifer meliloti).